Here is a 201-residue protein sequence, read N- to C-terminus: Mediator of RNA polymerase II transcription subunit 22 (201 aa).

Positions 93-123 (SVNEAIDQRNQQLRALQEECDRKLIALRDEV) form a coiled coil. The tract at residues 166-201 (LSAPLLASPEPSAGGPLQAAAPTHSHAGGPGPTEHA) is disordered.

In terms of assembly, component of the Mediator complex, which is composed of MED1, MED4, MED6, MED7, MED8, MED9, MED10, MED11, MED12, MED13, MED13L, MED14, MED15, MED16, MED17, MED18, MED19, MED20, MED21, MED22, MED23, MED24, MED25, MED26, MED27, MED29, MED30, MED31, CCNC, CDK8 and CDC2L6/CDK11. The MED12, MED13, CCNC and CDK8 subunits form a distinct module termed the CDK8 module. Mediator containing the CDK8 module is less active than Mediator lacking this module in supporting transcriptional activation. Individual preparations of the Mediator complex lacking one or more distinct subunits have been variously termed ARC, CRSP, DRIP, PC2, SMCC and TRAP.

Its subcellular location is the nucleus. Its function is as follows. Component of the Mediator complex, a coactivator involved in the regulated transcription of nearly all RNA polymerase II-dependent genes. Mediator functions as a bridge to convey information from gene-specific regulatory proteins to the basal RNA polymerase II transcription machinery. Mediator is recruited to promoters by direct interactions with regulatory proteins and serves as a scaffold for the assembly of a functional preinitiation complex with RNA polymerase II and the general transcription factors. The sequence is that of Mediator of RNA polymerase II transcription subunit 22 (MED22) from Bos taurus (Bovine).